The primary structure comprises 222 residues: MRNHDCPTVRFFKARVYKEKETQMTQTKKAKVRNLIIAAMLTALGILIPMMMPVKLIIGPASFTLAAHVPVMAAMFFSPLMTAFVALGTTLGFMISIPVPTIWLRALMHLPVMTVGAYVLKKYPEFVHQKVKIQIFNFILGIFHAGLETLVVYAFYSLGFANIEQGALLNFLLLIALGGLVHSMIDFNLALGLGNVLSKAFPIDIFDKAKNLVNKKKVKAEI.

Helical transmembrane passes span 34–54, 72–94, 101–120, 135–155, and 167–187; these read NLIIAAMLTALGILIPMMMPV, MAAMFFSPLMTAFVALGTTLGFM, TIWLRALMHLPVMTVGAYVL, IFNFILGIFHAGLETLVVYAF, and ALLNFLLLIALGGLVHSMIDF.

Belongs to the vitamin uptake transporter (VUT/ECF) (TC 2.A.88) family. As to quaternary structure, in L.lactis forms a stable complex with EcfA, EcfA' and EcfT. In E.coli forms a stable energy-coupling factor (ECF) transporter complex composed of 2 membrane-embedded substrate-binding proteins (S component), 2 ATP-binding proteins (A and A' components) and 2 transmembrane proteins (T component), probably with a stoichiometry of 2:1:1:2. May be able to interact with more than 1 S component at a time.

Its subcellular location is the cell membrane. Functionally, probably a niacin-binding protein that interacts with the energy-coupling factor (ECF) ABC-transporter complex. Unlike classic ABC transporters this ECF transporter provides the energy necessary to transport a number of different substrates. The substrates themselves are bound by transmembrane, not extracytoplasmic soluble proteins. Uptake of niacin into proteosomes containing EcfA1A2T and Niax has been demonstrated. Uptake requires hydrolyzable Mg-ATP and is substrate-specific; NiaX-containing proteosomes did not transport riboflavin. This is Niacin transporter NiaX (niaX) from Lactococcus lactis subsp. cremoris (strain MG1363).